Here is a 386-residue protein sequence, read N- to C-terminus: Vesicle-associated protein 2-2 (386 aa).

Met-1 is subject to N-acetylmethionine. Over 1–363 (MNMPLLDIQP…TKKIVKEVHN (363 aa)) the chain is Cytoplasmic. In terms of domain architecture, MSP spans 5 to 125 (LLDIQPRTLQ…EENKLRVTLV (121 aa)). A Phosphoserine modification is found at Ser-279. Residues 300 to 353 (ELKLVKDIEEMKLKVDALESKLKQADSTISKLMEERSISSQHRQSLQHELAELR) adopt a coiled-coil conformation. Residues 364-384 (GFPLLYVCVVAFIAYVIGHFL) traverse the membrane as a helical; Anchor for type IV membrane protein segment.

This sequence belongs to the VAMP-associated protein (VAP) (TC 9.B.17) family. Interacts with cowpea mosaic virus (CPMV) NTP-binding protein (NTB).

The protein resides in the endoplasmic reticulum membrane. Its function is as follows. May play a role in vesicle trafficking. The polypeptide is Vesicle-associated protein 2-2 (PVA22) (Arabidopsis thaliana (Mouse-ear cress)).